The primary structure comprises 309 residues: Taste receptor type 2 member 43 (309 aa).

A topological domain (extracellular) is located at residue Met1. The helical transmembrane segment at 2–22 (ITFLPIIFSSLVVVTFVIGNF) threads the bilayer. The Cytoplasmic portion of the chain corresponds to 23 to 46 (ANGFIALVNSIEWFKRQKISFADQ). A helical membrane pass occupies residues 47-67 (ILTALAVSRVGLLWVLLLNWY). Topologically, residues 68–86 (LTVLNPAFNSVEVRTTAYN) are extracellular. Residues 87-107 (IWAVINHFSNWLATSLSIFYL) form a helical membrane-spanning segment. At 108 to 126 (LKIANFSNFIFLHLKRRVK) the chain is on the cytoplasmic side. A helical transmembrane segment spans residues 127 to 147 (SVILVMLLGPLLFLACHLFMI). The Extracellular segment spans residues 148-178 (NMNEIVRTKEFDGNMTWKIKLKSAMYFSNMT). N-linked (GlcNAc...) asparagine glycans are attached at residues Asn161 and Asn176. A helical membrane pass occupies residues 179 to 199 (VTMVANLVPFTLTLLSFLLLI). The Cytoplasmic portion of the chain corresponds to 200-229 (CSLCKHLKKMQLHGKGSQDPSTKVHIKALQ). The chain crosses the membrane as a helical span at residues 230 to 250 (TVISFLLLCAIYFLSIMISVW). The Extracellular portion of the chain corresponds to 251-259 (SFGSLENKP). A helical transmembrane segment spans residues 260-280 (VFMFCKAIRFSYPSIHPFILI). Residues 281–309 (WGNKKLKQTFLSVFWQMRYWVKGEKTSSP) lie on the Cytoplasmic side of the membrane.

The protein belongs to the G-protein coupled receptor T2R family.

The protein localises to the membrane. It localises to the cell projection. Its subcellular location is the cilium membrane. Its function is as follows. Gustducin-coupled receptor immplicated in the perception of bitter compounds in the oral cavity and the gastrointestinal tract. Signals through PLCB2 and the calcium-regulated cation channel TRPM5. Activated by the sulfonyl amide sweeteners saccharin and acesulfame K. In airway epithelial cells, binding of bitter compounds increases the intracellular calcium ion concentration and stimulates ciliary beat frequency. May act as chemosensory receptors in airway epithelial cells to detect and eliminate potential noxious agents from the airways. The sequence is that of Taste receptor type 2 member 43 (TAS2R43) from Pan paniscus (Pygmy chimpanzee).